The following is a 230-amino-acid chain: Iron-dependent repressor IdeR (230 aa).

The HTH dtxR-type domain occupies 4 to 65 (LVDTTEMYLR…VAGNRHLELT (62 aa)).

It belongs to the DtxR/MntR family. In terms of assembly, homodimer.

Its subcellular location is the cytoplasm. Metal-dependent DNA-binding protein that controls transcription of many genes involved in iron metabolism. The polypeptide is Iron-dependent repressor IdeR (ideR) (Mycobacterium leprae (strain TN)).